Reading from the N-terminus, the 448-residue chain is Tubulin beta chain (448 aa).

8 residues coordinate GTP: Gln11, Glu69, Ser138, Gly142, Thr143, Gly144, Asn204, and Asn226. Glu69 serves as a coordination point for Mg(2+).

It belongs to the tubulin family. As to quaternary structure, dimer of alpha and beta chains. A typical microtubule is a hollow water-filled tube with an outer diameter of 25 nm and an inner diameter of 15 nM. Alpha-beta heterodimers associate head-to-tail to form protofilaments running lengthwise along the microtubule wall with the beta-tubulin subunit facing the microtubule plus end conferring a structural polarity. Microtubules usually have 13 protofilaments but different protofilament numbers can be found in some organisms and specialized cells. Requires Mg(2+) as cofactor.

It is found in the cytoplasm. The protein resides in the cytoskeleton. Tubulin is the major constituent of microtubules, a cylinder consisting of laterally associated linear protofilaments composed of alpha- and beta-tubulin heterodimers. Microtubules grow by the addition of GTP-tubulin dimers to the microtubule end, where a stabilizing cap forms. Below the cap, tubulin dimers are in GDP-bound state, owing to GTPase activity of alpha-tubulin. This chain is Tubulin beta chain (TUB1), found in Melampsora lini (Rust fungus).